The primary structure comprises 315 residues: Ribosomal RNA small subunit methyltransferase H (315 aa).

S-adenosyl-L-methionine is bound by residues 37–39 (GGH), Asp57, Phe83, Asp105, and Gln112.

The protein belongs to the methyltransferase superfamily. RsmH family.

It is found in the cytoplasm. The enzyme catalyses cytidine(1402) in 16S rRNA + S-adenosyl-L-methionine = N(4)-methylcytidine(1402) in 16S rRNA + S-adenosyl-L-homocysteine + H(+). Specifically methylates the N4 position of cytidine in position 1402 (C1402) of 16S rRNA. This is Ribosomal RNA small subunit methyltransferase H from Pseudomonas fluorescens (strain ATCC BAA-477 / NRRL B-23932 / Pf-5).